The primary structure comprises 193 residues: Ion-translocating oxidoreductase complex subunit B (193 aa).

The interval 1–23 is hydrophobic; the sequence is MTFLFIVITLLALIFGAILGFAS. Residues 29–87 form the 4Fe-4S domain; that stretch reads EADPVVEKIDAILPQSQCGQCGYPGCKPYAEAICNGDEITKCIPGGQTTIVKIAEILGV. Positions 46, 49, 54, 70, 110, 113, 116, 120, 140, 143, 146, and 150 each coordinate [4Fe-4S] cluster. 2 4Fe-4S ferredoxin-type domains span residues 101–130 and 131–160; these read KVAFIDENMCIGCTKCIQACPVDAIIGTNK and AMHTIIPDLCTGCELCVAPCPTDCILMIPV.

It belongs to the 4Fe4S bacterial-type ferredoxin family. RnfB subfamily. The complex is composed of six subunits: RnfA, RnfB, RnfC, RnfD, RnfE and RnfG. The cofactor is [4Fe-4S] cluster.

It is found in the cell inner membrane. Functionally, part of a membrane-bound complex that couples electron transfer with translocation of ions across the membrane. The polypeptide is Ion-translocating oxidoreductase complex subunit B (Haemophilus influenzae (strain 86-028NP)).